The sequence spans 171 residues: Co-chaperone protein HscB (171 aa).

One can recognise a J domain in the interval 2 to 74 (DYFTLFGLPA…LTRAEYLLSL (73 aa)).

Belongs to the HscB family. Interacts with HscA and stimulates its ATPase activity. Interacts with IscU.

Functionally, co-chaperone involved in the maturation of iron-sulfur cluster-containing proteins. Seems to help targeting proteins to be folded toward HscA. The chain is Co-chaperone protein HscB from Salmonella typhimurium (strain LT2 / SGSC1412 / ATCC 700720).